Reading from the N-terminus, the 163-residue chain is RRM-domain-containing protein ECU01_0840 (163 aa).

The 80-residue stretch at 84–163 (CSVKLSNLPL…SLGLSAEIAR (80 aa)) folds into the RRM domain.

The sequence is that of RRM-domain-containing protein ECU01_0840 from Encephalitozoon cuniculi (strain GB-M1) (Microsporidian parasite).